A 204-amino-acid chain; its full sequence is uncharacterized protein (204 aa).

In terms of biological role, possibly involved in pGI2 replication mechanism. This is an uncharacterized protein from Bacillus thuringiensis.